The following is a 524-amino-acid chain: Probable malate:quinone oxidoreductase (524 aa).

The protein belongs to the MQO family. FAD serves as cofactor.

The enzyme catalyses (S)-malate + a quinone = a quinol + oxaloacetate. The protein operates within carbohydrate metabolism; tricarboxylic acid cycle; oxaloacetate from (S)-malate (quinone route): step 1/1. This is Probable malate:quinone oxidoreductase from Blochmanniella floridana.